We begin with the raw amino-acid sequence, 446 residues long: Na(+)/H(+) antiporter NhaA (446 aa).

A run of 11 helical transmembrane segments spans residues 23-43 (GGMLLMGVVLLAMFLANSPWG), 73-93 (LMTFINDALMAVFFFSVGLEI), 109-129 (LLPIVAACGGMLVPVLIYYFM), 138-158 (GLAIPMATDIAFSLGVLSLFG), 167-187 (VFLTAFAVVDDIGGILVIALF), 193-213 (SVNYLIASAGILLILCGGNFF), 219-239 (WFYIFWGVIMWYLFLQSGIHA), 314-334 (MVNYIILPLFAFANAGVSLTA), 348-368 (VLAGLLAGKFAGIYFFTWLVI), 381-401 (WVNLTGICLLGGIGFTVSLFI), and 419-439 (GVILGTVLAGVLAYLVLQFAL).

It belongs to the NhaA Na(+)/H(+) (TC 2.A.33) antiporter family.

The protein resides in the cell inner membrane. The enzyme catalyses Na(+)(in) + 2 H(+)(out) = Na(+)(out) + 2 H(+)(in). Na(+)/H(+) antiporter that extrudes sodium in exchange for external protons. The chain is Na(+)/H(+) antiporter NhaA from Phocaeicola vulgatus (strain ATCC 8482 / DSM 1447 / JCM 5826 / CCUG 4940 / NBRC 14291 / NCTC 11154) (Bacteroides vulgatus).